A 277-amino-acid polypeptide reads, in one-letter code: MVEKFVSAERPQTEEGMQYHIACKPGDVARYVLLPGDPERVPKISSLWDEAREIAFHREYRTHTGKYKGVPISVTSTGIGGPSTAIAIEELAAIGADTFIRVGSTGAIQPGIEIGDLIIAKAAVRLEGTSKQYVRVEYPAVADLEVTLALIEAAESLGVRYHIGITASTDSFYLGQGRPGLNGYFPSFARNLVDDLRQARVTNFEMEAATLYTLANIYGLRAGCVCAVFANRVTNEFGKAGEKEAALVASEAVKILAEWDEEKERAGKRVWHPGMRG.

It belongs to the PNP/UDP phosphorylase family.

It localises to the cytoplasm. It carries out the reaction uridine + phosphate = alpha-D-ribose 1-phosphate + uracil. Its pathway is pyrimidine metabolism; UMP biosynthesis via salvage pathway; uracil from uridine (phosphorylase route): step 1/1. Catalyzes the reversible phosphorylytic cleavage of uridine to uracil and ribose-1-phosphate. The sequence is that of Uridine phosphorylase from Thermococcus kodakarensis (strain ATCC BAA-918 / JCM 12380 / KOD1) (Pyrococcus kodakaraensis (strain KOD1)).